A 1567-amino-acid polypeptide reads, in one-letter code: MSFEVGTRCWYPSKEQGWIGAEVTKNDLKDGTYFMELTLEDNEVVNVETKDLTNEKDPSLPLLRNPPILESTEDLTTLSYLNEPAVLHAIKQRYSQLNIYTYSGIVLIATNPFDRMDQLYSQDMIQAYSGKRRGEIEPHLFAIAEEAYRLMKNDKQNQTIVVSGESGAGKTVSAKYIMRYFASCDEENSSNMGNLQHTAEMSETEERILATNPIMEAFGNAKTTRNDNSSRFGKYLEILFDKETAIIGAKMRTYLLERSRLVYQPKTERNYHIFYQILAGLPEDVKQELHLTKADDYFYMNQGGEPEIAGIDDVSEYGITIKALTLVGVAPETQQHIFKILAALLHIGNIEIKKTRNDSSLSSDEPNLKIACELLGVDPSNFAKWITKKQIVTRSEKIVSNLNYSQALVARDSVAKFIYSALFDWLVTNINTVLCNPAVLDQIHSFIGVLDIYGFEHFEKNSFEQFCINYANEKLQQEFNQHVFKLEQEEYIKEEIEWSFIEFNDNQPCIDLIENKLGILSLLDEESRLPAGSDESWTQKLYQTLDKPPTNKVFSKPRFGQTKFVVSHYALDVAYDVEGFIEKNRDTVSDGHLEVLKATTNDTLSTILESVEESARKVEEAKKNAASQDQKQLKKPTPIRQVQRKPTLGSMFKLSLIELMQTINSTNVHYIRCIKPNGEKEAWKFDNLMVLSQLRACGVLETIRISCAGFPSRWTFNEFILRYYILIPPVEWAPIFQKNDLTEQDVINLCKKILAATVQDKEKYQIGNTKIFFKAGMLAYFEKLRSTKMNSAIVLIQKHIRSKYYRKQYMLMKASLSLLGAYSKGTVIRQRVEYELEQHAATLIQTMYRGYSKRSYISGVISSIVKLQSRIREELEQREMQSKYESNAAISIQSRIRAFVPRKAYESKRRDTIVVQSLIRRRIAQRDFKKLKADAKSVHHLKEVSYKLENKVIQLTQNLAAKVKENRQLSKRLEELQATMVTVSELQDQLEAQKMENQKALADQKDGFVLDSKSLKDQLIKANKDVESVKFELATLTAKYTEMEAESKNQLDELERTKTLLTESKTQNSDLYSEIKSLKEELAHLQTSIALGTVTTNTNIVPHTPSRENRMPSGHMRAAEENISPNQLKSIPSDTAADHVSVNGYGMDDDIINTNTLTQINEELYRLLEGTDVLNNEITEGLLKGFQVPDAGVAIQLSRRDVVYPARILIIVLSEMWRFGLTKQSESFLAQVLTTIQKVVTTLKGIDLIPSGAFWLANVRELYSFVVFAQHSILTEESFKKGMNDEEYNEYVSLVTELKEDFESLSYNIYNIWLKKLQKDLQKKAINAVVVSESLPGFNASESNGFLNKIFNSGEEYTMDDILTFFNNIFWCMKSFHIENEVFRTVIITLLNYVDTICFNDLIMKRNFLSWKRGLQLNYNVTRLEEWCKTHGLPDGAQYLQHLIQTAKLLQLRKYTIEDIDMVRGICSSLSPAQLQKLISQYHVADYESPIPQDILKYVADIVKKESTSAHNDIFLHPETGPFNDPFVAVKTRKFDQVEAYIPSWLVLPVTKRIVDLVAQQVTVPDA.

The Myosin N-terminal SH3-like domain maps to 4–57 (EVGTRCWYPSKEQGWIGAEVTKNDLKDGTYFMELTLEDNEVVNVETKDLTNEKD). In terms of domain architecture, Myosin motor spans 70–786 (ESTEDLTTLS…MLAYFEKLRS (717 aa)). 164–171 (GESGAGKT) contributes to the ATP binding site. The actin-binding stretch occupies residues 446-526 (FIGVLDIYGF…LGILSLLDEE (81 aa)). The segment at 619 to 640 (EEAKKNAASQDQKQLKKPTPIR) is disordered. 6 consecutive IQ domains span residues 789 to 818 (MNSAIVLIQKHIRSKYYRKQYMLMKASLSL), 812 to 836 (MKASLSLLGAYSKGTVIRQRVEYEL), 837 to 859 (EQHAATLIQTMYRGYSKRSYISG), 860 to 884 (VISSIVKLQSRIREELEQREMQSKY), 885 to 907 (ESNAAISIQSRIRAFVPRKAYES), and 908 to 937 (KRRDTIVVQSLIRRRIAQRDFKKLKADAKS). Residues 947 to 1091 (KLENKVIQLT…LAHLQTSIAL (145 aa)) adopt a coiled-coil conformation. The non alpha-helical, tail domain stretch occupies residues 1092-1567 (GTVTTNTNIV…VAQQVTVPDA (476 aa)). The Dilute domain maps to 1230 to 1505 (AQVLTTIQKV…LKYVADIVKK (276 aa)).

Belongs to the TRAFAC class myosin-kinesin ATPase superfamily. Myosin family. Homodimer. Interacts with calmodulin (CMD1) and the myosin light chain MLC1 through its IQ repeats.

Its function is as follows. Myosin heavy chain that is required for the cell cycle-regulated transport of various organelles and proteins for their segregation. Functions by binding with its tail domain to receptor proteins on organelles and exerting force with its N-terminal motor domain against actin filaments, thereby transporting its cargo along polarized actin cables. This Naumovozyma castellii (Yeast) protein is Myosin-2A (MYO2A).